A 164-amino-acid chain; its full sequence is uncharacterized protein (164 aa).

A disordered region spans residues glycine 46–leucine 142.

This is an uncharacterized protein from Caenorhabditis elegans.